The primary structure comprises 190 residues: Adenylate kinase (190 aa).

11–16 (GAGKGT) provides a ligand contact to ATP. The NMP stretch occupies residues 31 to 60 (STGDIFRFNLKNDTELGKQARVFMDNGELV). AMP-binding positions include Thr32, Arg37, 58–60 (ELV), 86–89 (GYPR), and Gln93. The LID stretch occupies residues 127–137 (ERGKTSGRADD). Arg128 provides a ligand contact to ATP. AMP-binding residues include Arg134 and Arg146. An ATP-binding site is contributed by Gly174.

This sequence belongs to the adenylate kinase family. As to quaternary structure, monomer.

Its subcellular location is the cytoplasm. It catalyses the reaction AMP + ATP = 2 ADP. It participates in purine metabolism; AMP biosynthesis via salvage pathway; AMP from ADP: step 1/1. Its function is as follows. Catalyzes the reversible transfer of the terminal phosphate group between ATP and AMP. Plays an important role in cellular energy homeostasis and in adenine nucleotide metabolism. This is Adenylate kinase from Flavobacterium johnsoniae (strain ATCC 17061 / DSM 2064 / JCM 8514 / BCRC 14874 / CCUG 350202 / NBRC 14942 / NCIMB 11054 / UW101) (Cytophaga johnsonae).